The following is a 1134-amino-acid chain: Spermatogenesis-associated protein 31C2 (1134 aa).

The helical transmembrane segment at 23–43 (PWVLDIFLTLVFALGFFFLLL) threads the bilayer. Disordered regions lie at residues 54 to 87 (PPSPSPKKRKRHLVSQRPAGRRGRPRGRMKNHSL), 115 to 243 (LEKG…LLTP), 477 to 504 (PGTSQAKGKPRPWQSSTSTGESSKEAQT), 524 to 561 (TPQNLSRGMESFPGKVLGATSEESERNLRKPLRSDSGS), 727 to 807 (MPER…PTVP), 928 to 1007 (NMGH…PSIS), and 1111 to 1134 (AASSQQATLKNQSRPNRDRQIRDQ). Basic residues predominate over residues 59–87 (PKKRKRHLVSQRPAGRRGRPRGRMKNHSL). Basic and acidic residues predominate over residues 132 to 148 (VGKRTPDGASRSSHEPT). Positions 185 to 201 (SSLSASQPPEPSLLLEH) are enriched in low complexity. Residues 204–235 (PEPPALFPHPPRTPDPLACSPPPPKGFTPPPL) show a composition bias toward pro residues. Over residues 489–504 (WQSSTSTGESSKEAQT) the composition is skewed to polar residues. Polar residues-rich tracts occupy residues 773-794 (LTYSLTGSTQQSRSLGAQSSRA) and 937-948 (PNCQGSCKSQSP). Residues 954–970 (HKRENSRKPNLEKHEEM) are compositionally biased toward basic and acidic residues. Positions 1111–1124 (AASSQQATLKNQSR) are enriched in polar residues. The span at 1125–1134 (PNRDRQIRDQ) shows a compositional bias: basic and acidic residues.

The protein belongs to the SPATA31 family.

It localises to the membrane. Functionally, may play a role in spermatogenesis. The chain is Spermatogenesis-associated protein 31C2 (SPATA31C2) from Homo sapiens (Human).